Consider the following 210-residue polypeptide: TM2 domain-containing protein C02F5.13 (210 aa).

Residues 1-18 form the signal peptide; the sequence is MRRLPWLIPFFLVNISNG. Residues 19–138 are Extracellular-facing; the sequence is NNEFRIEFEY…PRTFTKSTPC (120 aa). N-linked (GlcNAc...) asparagine glycosylation occurs at Asn91. The chain crosses the membrane as a helical span at residues 139-159; sequence IIYNGHYFLTTLLYSIFLGVV. In terms of domain architecture, TM2 spans 143-191; that stretch reads GHYFLTTLLYSIFLGVVAVDRFCLGYSAMAVGKLMTLGGFGIWWIVDIF. The Cytoplasmic segment spans residues 160–178; it reads AVDRFCLGYSAMAVGKLMT. Residues 179–199 form a helical membrane-spanning segment; that stretch reads LGGFGIWWIVDIFLLVLGVLG. The Extracellular portion of the chain corresponds to 200-210; that stretch reads PADDSSWEPYY.

The protein belongs to the TM2 family.

It localises to the membrane. This Caenorhabditis elegans protein is TM2 domain-containing protein C02F5.13.